Here is a 186-residue protein sequence, read N- to C-terminus: Peptidyl-tRNA hydrolase (186 aa).

Catalysis depends on His19, which acts as the Proton acceptor. Residues Phe64, Asn66, and Asn112 each coordinate tRNA.

This sequence belongs to the PTH family. As to quaternary structure, monomer.

The protein resides in the cytoplasm. The catalysed reaction is an N-acyl-L-alpha-aminoacyl-tRNA + H2O = an N-acyl-L-amino acid + a tRNA + H(+). Hydrolyzes ribosome-free peptidyl-tRNAs (with 1 or more amino acids incorporated), which drop off the ribosome during protein synthesis, or as a result of ribosome stalling. Its function is as follows. Catalyzes the release of premature peptidyl moieties from peptidyl-tRNA molecules trapped in stalled 50S ribosomal subunits, and thus maintains levels of free tRNAs and 50S ribosomes. This Pelagibacter ubique (strain HTCC1062) protein is Peptidyl-tRNA hydrolase.